Consider the following 748-residue polypeptide: Phosphoenolpyruvate-dependent phosphotransferase system (748 aa).

The region spanning 1-127 is the GAF domain; sequence MLTRLREIVE…RRQLLGVLVV (127 aa). The tract at residues 128–170 is linker; that stretch reads QQRELRQYDESEESFLVTLATQMAAILSQSQVTALFGQYRQTR. The segment at 171–748 is PTS EI; that stretch reads IRALPAAPGV…GMGGLIRGGL (578 aa). Histidine 356 functions as the Tele-phosphohistidine intermediate in the catalytic mechanism. Phosphoenolpyruvate is bound by residues arginine 462 and arginine 498. Residues glutamate 597 and aspartate 621 each contribute to the Mg(2+) site. Phosphoenolpyruvate contacts are provided by residues 620–621 and arginine 631; that span reads ND. Catalysis depends on cysteine 668, which acts as the Proton donor.

Belongs to the PEP-utilizing enzyme family. It depends on Mg(2+) as a cofactor.

It is found in the cytoplasm. The enzyme catalyses L-histidyl-[protein] + phosphoenolpyruvate = N(pros)-phospho-L-histidyl-[protein] + pyruvate. Component of the phosphoenolpyruvate-dependent nitrogen-metabolic phosphotransferase system (nitrogen-metabolic PTS), that seems to be involved in regulating nitrogen metabolism. Enzyme I-Ntr transfers the phosphoryl group from phosphoenolpyruvate (PEP) to the phosphoryl carrier protein (NPr). Could function in the transcriptional regulation of sigma-54 dependent operons in conjunction with the NPr (PtsO) and EIIA-Ntr (PtsN) proteins. Enzyme I-Ntr is specific for NPr. The polypeptide is Phosphoenolpyruvate-dependent phosphotransferase system (ptsP) (Salmonella typhimurium (strain LT2 / SGSC1412 / ATCC 700720)).